A 249-amino-acid polypeptide reads, in one-letter code: MLRAKVRRIALANQKGGVGKTTTAINLAAYLARLGKRVLLVDLDPQGNATSGLGVRAERGVYHLLQGEPLEGLVHPVDGFHLLPATPDLVGATVELAGAPTALREALRDEGYDLVLLDAPPSLSPLTLNALAAAEGVVVPVQAEYYALEGVAGLLATLEEVRAGLNPRLRLLGILVTMYDGRTLLAQQVEAQLRAHFGEKVFWTVIPRNVRLAEAPSFGKTIAQHAPTSPGAHAYRRLAEEVMARVQEA.

Residues lysine 15, glycine 16, glycine 17, valine 18, glycine 19, lysine 20, threonine 21, threonine 22, proline 207, and asparagine 209 each coordinate ATP. Residue glycine 17 coordinates ADP. Residues glycine 19, lysine 20, threonine 21, threonine 22, proline 207, and asparagine 209 each coordinate ADP. Threonine 21 contributes to the Mg(2+) binding site.

Belongs to the ParA family. As to quaternary structure, monomer in the absence of nucleotides or presence of ADP, in the presence of ATP is found in a monomer-dimer equilibrium. ATP-binding is required for DNA-binding. Probably interacts with Spo0J.

The catalysed reaction is ATP + H2O = ADP + phosphate + H(+). Its activity is regulated as follows. ATPase activity is stimulated 10-fold in the presence of Spo0J and parS DNA (a plasmid centromere-like site or plasmid DNA itself). The first 20 residues of Spo0J stimulate its ATPase activity by 8%. In terms of biological role, ATPase probably involved in chromosome partitioning. Cooperatively binds dsDNA, forming nucleoprotein filaments in a strictly ATP-dependent fashion. Can also bind ssDNA with lower affinity. The polypeptide is Chromosome-partitioning ATPase Soj (Thermus thermophilus (strain ATCC BAA-163 / DSM 7039 / HB27)).